Reading from the N-terminus, the 243-residue chain is Peptidase E (243 aa).

Active-site charge relay system residues include S118, D133, and H155.

The protein belongs to the peptidase S51 family.

The protein resides in the cytoplasm. It carries out the reaction Dipeptidase E catalyzes the hydrolysis of dipeptides Asp-|-Xaa. It does not act on peptides with N-terminal Glu, Asn or Gln, nor does it cleave isoaspartyl peptides.. In terms of biological role, hydrolyzes dipeptides containing N-terminal aspartate residues. May play a role in allowing the cell to use peptide aspartate to spare carbon otherwise required for the synthesis of the aspartate family of amino acids. The polypeptide is Peptidase E (Streptomyces coelicolor (strain ATCC BAA-471 / A3(2) / M145)).